The following is a 744-amino-acid chain: Receptor-like serine/threonine-protein kinase ALE2 (744 aa).

A signal peptide spans 1 to 19; it reads MRNFAMLLLLILLLHSLAS. Residues 20–260 are Extracellular-facing; the sequence is FPICFARLFP…SQGIGFRTIA (241 aa). The span at 59–68 shows a compositional bias: pro residues; it reads PAFSPNPSRI. A disordered region spans residues 59–79; it reads PAFSPNPSRIPPLRHKGHHRH. Positions 70–79 are enriched in basic residues; it reads PLRHKGHHRH. Residues Asn-87, Asn-186, Asn-204, Asn-243, and Asn-249 are each glycosylated (N-linked (GlcNAc...) asparagine). The chain crosses the membrane as a helical span at residues 261–281; sequence IIALSGFVLILVLVGAISIIV. At 282–744 the chain is on the cytoplasmic side; it reads KWKKIGKSSN…HLWSGNGDWL (463 aa). Residues 349–619 enclose the Protein kinase domain; sequence FSAKRVLGEG…GEVVQALKLI (271 aa). Residues 355 to 363 and Lys-377 contribute to the ATP site; that span reads LGEGGFGRV. Residue Asp-470 is the Proton acceptor of the active site. 2 disordered regions span residues 681-705 and 722-744; these read EDME…PNRS and GSMS…GDWL.

The protein belongs to the protein kinase superfamily. Ser/Thr protein kinase family. Autophosphorylated and phosphorylated by ACR4.

Its subcellular location is the cell membrane. The catalysed reaction is L-seryl-[protein] + ATP = O-phospho-L-seryl-[protein] + ADP + H(+). It carries out the reaction L-threonyl-[protein] + ATP = O-phospho-L-threonyl-[protein] + ADP + H(+). Functionally, required during the differentiation of the protoderm into shoots epidermis and cuticle. The sequence is that of Receptor-like serine/threonine-protein kinase ALE2 (ALE2) from Arabidopsis thaliana (Mouse-ear cress).